Consider the following 350-residue polypeptide: Putative F-box protein At1g23770 (350 aa).

The span at 1–15 (MDTGFADSNNDSSPG) shows a compositional bias: polar residues. Residues 1-29 (MDTGFADSNNDSSPGEGSKRGNSGIEGPV) form a disordered region. The region spanning 206–252 (PPCLMLLPTELKLKILELLPGVSIGYMACVCTEMRYLASDNDLWEHK) is the F-box domain.

In Arabidopsis thaliana (Mouse-ear cress), this protein is Putative F-box protein At1g23770.